We begin with the raw amino-acid sequence, 109 residues long: U4-lycotoxin-Ls1a (109 aa).

A signal peptide spans 1-22; the sequence is MKVLVLFSVLFLTLFSYSSTEA. Residues 23 to 44 constitute a propeptide that is removed on maturation; the sequence is IDEFDSDAEEDMLSLMANEQVR. The tract at residues 45–88 is knottin domain; it reads AKACTPRLHDCSHDRHSCCRGELFKDVCYCFYPEGEDKTEVCSC. 4 disulfide bridges follow: Cys-48–Cys-63, Cys-55–Cys-72, Cys-62–Cys-88, and Cys-74–Cys-86. The tract at residues 89 to 108 is linear cationic cytotoxin domain; the sequence is QQPKSHKYIEKVVDKAKTVV.

This sequence belongs to the neurotoxin 19 (CSTX) family. 05 (U4-Lctx) subfamily. In terms of tissue distribution, expressed by the venom gland.

Its subcellular location is the secreted. Its function is as follows. Enhances the high-affinity desensitization of human P2RX3 purinoceptors. The protein is U4-lycotoxin-Ls1a of Lycosa singoriensis (Wolf spider).